A 1216-amino-acid polypeptide reads, in one-letter code: Regulator of telomere elongation helicase 1 (1216 aa).

One can recognise a Helicase ATP-binding domain in the interval Lys-7–His-295. Ser-42–Thr-49 contacts ATP. [4Fe-4S] cluster contacts are provided by Cys-144, Cys-162, Cys-171, and Cys-206. The short motif at Lys-150 to Val-166 is the Nuclear localization signal element. A DEAH box motif is present at residues Asp-249–His-252. Residues Gln-874–Lys-880 carry the Nuclear localization signal motif. 2 disordered regions span residues Gly-978–Gln-1018 and Gly-1140–Gln-1172. Residues Gln-1172–Leu-1179 carry the PIP-box motif.

It belongs to the helicase family. RAD3/XPD subfamily. As to quaternary structure, interacts with TERF1. Interacts (via PIP-box) with PCNA; the interaction is direct and essential for suppressing telomere fragility. Interacts with MMS19; the interaction mediates the association of RTEL1 with the cytosolic iron-sulfur protein assembly (CIA) complex. Highly expressed in adult testis, liver and ovary.

The protein localises to the nucleus. The catalysed reaction is ATP + H2O = ADP + phosphate + H(+). Functionally, a probable ATP-dependent DNA helicase implicated in telomere-length regulation, DNA repair and the maintenance of genomic stability. Acts as an anti-recombinase to counteract toxic recombination and limit crossover during meiosis. Regulates meiotic recombination and crossover homeostasis by physically dissociating strand invasion events and thereby promotes noncrossover repair by meiotic synthesis dependent strand annealing (SDSA) as well as disassembly of D loop recombination intermediates. Also disassembles T loops and prevents telomere fragility by counteracting telomeric G4-DNA structures, which together ensure the dynamics and stability of the telomere. This is Regulator of telomere elongation helicase 1 from Bos taurus (Bovine).